Reading from the N-terminus, the 284-residue chain is Bifunctional protein FolD 2 (284 aa).

Residues glycine 165–glycine 167, threonine 192, and valine 233 contribute to the NADP(+) site.

This sequence belongs to the tetrahydrofolate dehydrogenase/cyclohydrolase family. Homodimer.

The catalysed reaction is (6R)-5,10-methylene-5,6,7,8-tetrahydrofolate + NADP(+) = (6R)-5,10-methenyltetrahydrofolate + NADPH. It catalyses the reaction (6R)-5,10-methenyltetrahydrofolate + H2O = (6R)-10-formyltetrahydrofolate + H(+). Its pathway is one-carbon metabolism; tetrahydrofolate interconversion. Catalyzes the oxidation of 5,10-methylenetetrahydrofolate to 5,10-methenyltetrahydrofolate and then the hydrolysis of 5,10-methenyltetrahydrofolate to 10-formyltetrahydrofolate. This Streptomyces avermitilis (strain ATCC 31267 / DSM 46492 / JCM 5070 / NBRC 14893 / NCIMB 12804 / NRRL 8165 / MA-4680) protein is Bifunctional protein FolD 2.